A 340-amino-acid polypeptide reads, in one-letter code: Glyceraldehyde-3-phosphate dehydrogenase (340 aa).

NAD(+)-binding positions include 13–14 (TI) and Gly-112. 141–143 (SCN) lines the D-glyceraldehyde 3-phosphate pocket. The Nucleophile role is filled by Cys-142. An NAD(+)-binding site is contributed by Arg-170. 196-197 (HG) contributes to the D-glyceraldehyde 3-phosphate binding site. Residue Gln-302 participates in NAD(+) binding.

It belongs to the glyceraldehyde-3-phosphate dehydrogenase family. As to quaternary structure, homotetramer.

It is found in the cytoplasm. The catalysed reaction is D-glyceraldehyde 3-phosphate + phosphate + NADP(+) = (2R)-3-phospho-glyceroyl phosphate + NADPH + H(+). It carries out the reaction D-glyceraldehyde 3-phosphate + phosphate + NAD(+) = (2R)-3-phospho-glyceroyl phosphate + NADH + H(+). It participates in carbohydrate degradation; glycolysis; pyruvate from D-glyceraldehyde 3-phosphate: step 1/5. This is Glyceraldehyde-3-phosphate dehydrogenase (gap) from Archaeoglobus fulgidus (strain ATCC 49558 / DSM 4304 / JCM 9628 / NBRC 100126 / VC-16).